The chain runs to 404 residues: Cysteine desulfurase IscS (404 aa).

Pyridoxal 5'-phosphate is bound by residues 75-76 (AT), Asn-155, Gln-183, and 203-205 (SAH). Lys-206 carries the N6-(pyridoxal phosphate)lysine modification. Position 243 (Thr-243) interacts with pyridoxal 5'-phosphate. Catalysis depends on Cys-328, which acts as the Cysteine persulfide intermediate. Cys-328 is a binding site for [2Fe-2S] cluster.

This sequence belongs to the class-V pyridoxal-phosphate-dependent aminotransferase family. NifS/IscS subfamily. Homodimer. Forms a heterotetramer with IscU, interacts with other sulfur acceptors. It depends on pyridoxal 5'-phosphate as a cofactor.

It localises to the cytoplasm. The catalysed reaction is (sulfur carrier)-H + L-cysteine = (sulfur carrier)-SH + L-alanine. The protein operates within cofactor biosynthesis; iron-sulfur cluster biosynthesis. In terms of biological role, master enzyme that delivers sulfur to a number of partners involved in Fe-S cluster assembly, tRNA modification or cofactor biosynthesis. Catalyzes the removal of elemental sulfur atoms from cysteine to produce alanine. Functions as a sulfur delivery protein for Fe-S cluster synthesis onto IscU, an Fe-S scaffold assembly protein, as well as other S acceptor proteins. The protein is Cysteine desulfurase IscS of Colwellia psychrerythraea (strain 34H / ATCC BAA-681) (Vibrio psychroerythus).